The primary structure comprises 86 residues: MATVFERVKKVSVEQLGAEEKDVVLTASFADDLGADSLDQVELIMALETEFGTPETKFEIPDTDAEKLKTVQAVVDYLKSKGIKDS.

The region spanning 2–82 (ATVFERVKKV…AVVDYLKSKG (81 aa)) is the Carrier domain. Position 37 is an O-(pantetheine 4'-phosphoryl)serine (Ser37).

The protein belongs to the acyl carrier protein (ACP) family. 4'-phosphopantetheine is transferred from CoA to a specific serine of apo-ACP by AcpS. This modification is essential for activity because fatty acids are bound in thioester linkage to the sulfhydryl of the prosthetic group.

Its subcellular location is the cytoplasm. Its pathway is lipid metabolism; fatty acid biosynthesis. Its function is as follows. Carrier of the growing fatty acid chain in fatty acid biosynthesis. The polypeptide is Acyl carrier protein (Dehalococcoides mccartyi (strain ATCC BAA-2100 / JCM 16839 / KCTC 5957 / BAV1)).